Here is a 57-residue protein sequence, read N- to C-terminus: UPF0391 membrane protein NE0130 (57 aa).

A run of 2 helical transmembrane segments spans residues 1 to 21 (MLKW…FGFR) and 33 to 53 (FLFF…LLGI).

It belongs to the UPF0391 family.

Its subcellular location is the cell membrane. The sequence is that of UPF0391 membrane protein NE0130 from Nitrosomonas europaea (strain ATCC 19718 / CIP 103999 / KCTC 2705 / NBRC 14298).